Consider the following 517-residue polypeptide: Glutamyl-tRNA(Gln) amidotransferase subunit A, mitochondrial (517 aa).

Catalysis depends on charge relay system residues K58 and S131. A disordered region spans residues 106–132 (FGMGTHSTHSAHGPVASPAGRSAGGSS). S155 functions as the Acyl-ester intermediate in the catalytic mechanism.

Belongs to the amidase family. GatA subfamily. Subunit of the heterotrimeric GatCAB amidotransferase (AdT) complex, composed of A, B and C subunits.

The protein localises to the mitochondrion. The catalysed reaction is L-glutamyl-tRNA(Gln) + L-glutamine + ATP + H2O = L-glutaminyl-tRNA(Gln) + L-glutamate + ADP + phosphate + H(+). Functionally, allows the formation of correctly charged Gln-tRNA(Gln) through the transamidation of misacylated Glu-tRNA(Gln) in the mitochondria. The reaction takes place in the presence of glutamine and ATP through an activated gamma-phospho-Glu-tRNA(Gln). The sequence is that of Glutamyl-tRNA(Gln) amidotransferase subunit A, mitochondrial from Pyricularia oryzae (strain 70-15 / ATCC MYA-4617 / FGSC 8958) (Rice blast fungus).